A 274-amino-acid polypeptide reads, in one-letter code: NAD kinase (274 aa).

The active-site Proton acceptor is the Asp60. NAD(+) is bound by residues 60–61 (DG), Lys65, 127–128 (NE), and Arg152.

It belongs to the NAD kinase family. The cofactor is a divalent metal cation.

The protein localises to the cytoplasm. It catalyses the reaction NAD(+) + ATP = ADP + NADP(+) + H(+). Involved in the regulation of the intracellular balance of NAD and NADP, and is a key enzyme in the biosynthesis of NADP. Catalyzes specifically the phosphorylation on 2'-hydroxyl of the adenosine moiety of NAD to yield NADP. The chain is NAD kinase from Mycoplasmoides gallisepticum (strain R(low / passage 15 / clone 2)) (Mycoplasma gallisepticum).